Reading from the N-terminus, the 276-residue chain is MIKPKIALTIAGTDPTGGAGVMADLKSFHSCGVYGMGVVTSIVAQNTLGVQHIHNLNHQWVDEQLDSVFNDTLPHAIKTGMIATADTMETIRHYLMQHESIPYVIDPVMLAKSGDSLMDNDTKQNLQHTLLPLADVVTPNLPEAEEITGLTIDSEEKIMQAGRIFINEIGSKGIIIKGGHSNDTDIAKDYLFTNEGVQTFENERFKTKHTHGTGCTFSAVITAELAKGRPLFEAVHKAKKFISMSIQYTPEIGRGRGPVNHFAYLKKEGLDDELSK.

Residue Q45 participates in 4-amino-5-hydroxymethyl-2-methylpyrimidine binding.

The protein belongs to the ThiD family.

The catalysed reaction is 4-amino-5-hydroxymethyl-2-methylpyrimidine + ATP = 4-amino-2-methyl-5-(phosphooxymethyl)pyrimidine + ADP + H(+). It catalyses the reaction 4-amino-2-methyl-5-(phosphooxymethyl)pyrimidine + ATP = 4-amino-2-methyl-5-(diphosphooxymethyl)pyrimidine + ADP. Its pathway is cofactor biosynthesis; thiamine diphosphate biosynthesis; 4-amino-2-methyl-5-diphosphomethylpyrimidine from 5-amino-1-(5-phospho-D-ribosyl)imidazole: step 2/3. It participates in cofactor biosynthesis; thiamine diphosphate biosynthesis; 4-amino-2-methyl-5-diphosphomethylpyrimidine from 5-amino-1-(5-phospho-D-ribosyl)imidazole: step 3/3. Functionally, catalyzes the phosphorylation of hydroxymethylpyrimidine phosphate (HMP-P) to HMP-PP, and of HMP to HMP-P. This is Hydroxymethylpyrimidine/phosphomethylpyrimidine kinase (thiD) from Staphylococcus aureus (strain Mu50 / ATCC 700699).